Reading from the N-terminus, the 1135-residue chain is Envelopment polyprotein (1135 aa).

The first 35 residues, 1 to 35 (MRILKLLELVVKVSLFTIALSSVLLAFLTFRATDA), serve as a signal peptide directing secretion. Residues 36–314 (KVEIIRGDHP…KYSKSIYKQT (279 aa)) lie on the Lumenal side of the membrane. The Cell attachment site signature appears at 41–43 (RGD). An N-linked (GlcNAc...) asparagine; by host glycan is attached at Asn116. Cysteines 122 and 156 form a disulfide. The non-covalent dimerization stretch occupies residues 177 to 195 (LDNKRHFSVGTNFFIPESL). N-linked (GlcNAc...) asparagine; by host glycosylation is present at Asn210. The cysteines at positions 224 and 285 are disulfide-linked. The chain crosses the membrane as a helical span at residues 315 to 366 (ACINFSWIRLILIALLIYFPIRWLVNKTTKPLFLWYDLMGLITYPVLLLINC). Residues 367–484 (LWKYFPFKCS…VPGCPFLVTS (118 aa)) are Cytoplasmic-facing. Residues 437–484 (LSLSLLKFVTEILIGLVILSQIPMSMAQTTQCLSGCFYVPGCPFLVTS) form a signal for signal peptide peptidase region. Residues 485 to 1067 (KFEKCPEKDQ…YFGSFFDTIR (583 aa)) lie on the Lumenal side of the membrane. N-linked (GlcNAc...) asparagine; by host glycosylation is found at Asn588, Asn605, and Asn980. The chain crosses the membrane as a helical span at residues 1068–1088 (VVLLIAFIFLVIYFCSILTSI). Residues 1089-1135 (CKGYVKHKSYKSRSKIEDDDEPEIKAPMLMKDTMTRRRPPMDFSHLV) lie on the Cytoplasmic side of the membrane.

It belongs to the tospovirus envelope glycoprotein family. As to quaternary structure, homodimer; disulfide-linked. Heterodimer with Glycoprotein C. Interacts with nucleoprotein. Heterodimer with Glycoprotein N. Interacts with nucleoprotein. In terms of processing, specific enzymatic cleavages in vivo yield mature proteins including Glycoprotein N and Glycoprotein C. Post-translationally, glycosylated with O-linked glycans. Glycosylation is essential for proper subcellular location. Cleaved at acidic pH.

It localises to the virion membrane. It is found in the host Golgi apparatus membrane. Its subcellular location is the host endoplasmic reticulum membrane. Its function is as follows. Forms the spikes present at the surface of the virion together with Glycoprotein C. They are able to attach the virion to a cell receptor and to promote fusion of membranes after endocytosis of the virion. Plays a role in virus binding and/or entry into the vector midgut. Functionally, forms the spikes present at the surface of the virion together with Glycoprotein N. They are able to attach the virion to a cell receptor and to promote fusion of membranes after endocytosis of the virion. Probable class II fusion protein. The sequence is that of Envelopment polyprotein (GP) from Frankliniella occidentalis (Western flower thrips).